Here is a 259-residue protein sequence, read N- to C-terminus: ATP synthase subunit b 2 (259 aa).

Residues W5–Y27 traverse the membrane as a helical segment.

This sequence belongs to the ATPase B chain family. F-type ATPases have 2 components, F(1) - the catalytic core - and F(0) - the membrane proton channel. F(1) has five subunits: alpha(3), beta(3), gamma(1), delta(1), epsilon(1). F(0) has three main subunits: a(1), b(2) and c(10-14). The alpha and beta chains form an alternating ring which encloses part of the gamma chain. F(1) is attached to F(0) by a central stalk formed by the gamma and epsilon chains, while a peripheral stalk is formed by the delta and b chains.

Its subcellular location is the cell inner membrane. Functionally, f(1)F(0) ATP synthase produces ATP from ADP in the presence of a proton or sodium gradient. F-type ATPases consist of two structural domains, F(1) containing the extramembraneous catalytic core and F(0) containing the membrane proton channel, linked together by a central stalk and a peripheral stalk. During catalysis, ATP synthesis in the catalytic domain of F(1) is coupled via a rotary mechanism of the central stalk subunits to proton translocation. In terms of biological role, component of the F(0) channel, it forms part of the peripheral stalk, linking F(1) to F(0). This Syntrophotalea carbinolica (strain DSM 2380 / NBRC 103641 / GraBd1) (Pelobacter carbinolicus) protein is ATP synthase subunit b 2.